Consider the following 289-residue polypeptide: Small ribosomal subunit protein uS2C (289 aa).

This sequence belongs to the universal ribosomal protein uS2 family. As to quaternary structure, component of the small ribosomal subunit. Mature ribosomes consist of a small (40S) and a large (60S) subunit. The 40S subunit contains about 33 different proteins and 1 molecule of RNA (18S). The 60S subunit contains about 49 different proteins and 3 molecules of RNA (25S, 5.8S and 5S). Interacts with rps21.

The protein localises to the cytoplasm. Functionally, required for the assembly and/or stability of the 40S ribosomal subunit. Required for the processing of the 20S rRNA-precursor to mature 18S rRNA in a late step of the maturation of 40S ribosomal subunits. This chain is Small ribosomal subunit protein uS2C (rps0c), found in Schizosaccharomyces japonicus (strain yFS275 / FY16936) (Fission yeast).